We begin with the raw amino-acid sequence, 142 residues long: Transcriptional regulator MraZ (142 aa).

SpoVT-AbrB domains are found at residues 5 to 51 and 77 to 120; these read ASAL…PRPE and AADV…DAAT.

The protein belongs to the MraZ family. As to quaternary structure, forms oligomers.

It is found in the cytoplasm. It localises to the nucleoid. The chain is Transcriptional regulator MraZ from Ralstonia nicotianae (strain ATCC BAA-1114 / GMI1000) (Ralstonia solanacearum).